Here is a 63-residue protein sequence, read N- to C-terminus: Bowman-Birk type proteinase inhibitor (63 aa).

Cystine bridges form between C8/C61, C9/C24, C12/C57, C14/C22, C31/C38, C35/C50, and C40/C48.

It belongs to the Bowman-Birk serine protease inhibitor family.

Its function is as follows. This inhibitor has two domains, each with separate antiprotease activity. Inhibits bovine trypsin and chymotrypsin, in a molar ratio of 1:1. The trypsin inhibition of FBI is independent of chymotrypsin inhibition, but the chymotrypsin inhibition is not completely independent of trypsin inhibition. In Vicia faba (Broad bean), this protein is Bowman-Birk type proteinase inhibitor.